The sequence spans 517 residues: Acetylcholine receptor subunit gamma (517 aa).

Residues 1–22 (MHGGQGPLLLLLLLAVCLGAQG) form the signal peptide. Topologically, residues 23–240 (RNQEERLLAD…VVFYLLIQRK (218 aa)) are extracellular. Residues Asn-52 and Asn-163 are each glycosylated (N-linked (GlcNAc...) asparagine). Cys-150 and Cys-164 are joined by a disulfide. The next 3 membrane-spanning stretches (helical) occupy residues 241–265 (PLFY…IHFL), 275–293 (TVAI…LVAK), and 309–330 (LTFL…LNVS). At 331-474 (LRSPHTHSMA…WFLVGRVLDR (144 aa)) the chain is on the cytoplasmic side. A helical transmembrane segment spans residues 475–495 (VCFLAMLSLFICGTAGIFLMA).

It belongs to the ligand-gated ion channel (TC 1.A.9) family. Acetylcholine receptor (TC 1.A.9.1) subfamily. Gamma/CHRNG sub-subfamily. Pentamer of two alpha chains, and one each of the beta, delta, and gamma (in immature muscle) or epsilon (in mature muscle) chains.

The protein resides in the postsynaptic cell membrane. Its subcellular location is the cell membrane. The enzyme catalyses K(+)(in) = K(+)(out). It catalyses the reaction Na(+)(in) = Na(+)(out). In terms of biological role, after binding acetylcholine, the AChR responds by an extensive change in conformation that affects all subunits and leads to opening of an ion-conducting channel across the plasma membrane. The chain is Acetylcholine receptor subunit gamma from Homo sapiens (Human).